The sequence spans 93 residues: Alpha-defensin 1 (93 aa).

The N-terminal stretch at 1–19 (MKKLVLLFALVLLGFQVQA) is a signal peptide. Positions 20 to 58 (DSIQNTDEETKTEEQPGEEDQAVSVSFGDPEGTSLQEES) are excised as a propeptide. The interval 24 to 54 (NTDEETKTEEQPGEEDQAVSVSFGDPEGTSL) is disordered. Cystine bridges form between Cys64-Cys92, Cys66-Cys81, and Cys71-Cys91.

The protein belongs to the alpha-defensin family. Paneth cells of the small bowel.

It localises to the secreted. Its function is as follows. Probably contributes to the antimicrobial barrier function of the small bowel mucosa. Has antibacterial activity against attenuated mutants of S.typhimurium. This is Alpha-defensin 1 (Defa1) from Mus musculus (Mouse).